Consider the following 798-residue polypeptide: Integrin beta-1 (798 aa).

An N-terminal signal peptide occupies residues 1-20 (MNLQLIFWIGLISSVCCVFG). Residues 21 to 728 (QADEDRCLKA…ETPECPTGPD (708 aa)) lie on the Extracellular side of the membrane. Residues 26–76 (RCLKANAKSCGECIQAGPNCGWCTNSTFLQEGMPTSARCDDLEALKKKGCH) enclose the PSI domain. Cystine bridges form between cysteine 27-cysteine 45, cysteine 35-cysteine 464, cysteine 38-cysteine 64, cysteine 48-cysteine 75, cysteine 207-cysteine 213, cysteine 261-cysteine 301, cysteine 401-cysteine 415, cysteine 435-cysteine 462, cysteine 466-cysteine 486, cysteine 477-cysteine 489, cysteine 491-cysteine 500, cysteine 502-cysteine 533, cysteine 516-cysteine 531, cysteine 525-cysteine 536, cysteine 538-cysteine 553, cysteine 555-cysteine 576, cysteine 560-cysteine 574, cysteine 568-cysteine 579, cysteine 581-cysteine 590, cysteine 592-cysteine 615, cysteine 599-cysteine 613, cysteine 607-cysteine 618, cysteine 620-cysteine 630, cysteine 633-cysteine 636, cysteine 640-cysteine 691, cysteine 646-cysteine 665, cysteine 649-cysteine 661, and cysteine 699-cysteine 723. Positions 75 to 91 (CHPNDTENPRGSKDIKK) are enriched in basic and acidic residues. The segment at 75–105 (CHPNDTENPRGSKDIKKNKNVTNRSKGTAEK) is disordered. N-linked (GlcNAc...) asparagine glycosylation is found at asparagine 94 and asparagine 97. Residues 140 to 378 (DYPIDLYYLM…QLIIDAYNSL (239 aa)) enclose the VWFA domain. Mg(2+)-binding residues include serine 152 and serine 154. Residues serine 154, aspartate 157, aspartate 158, and glutamate 189 each coordinate Ca(2+). Residues 207-213 (CTNEQNC) form a CX3CL1-binding region. Asparagine 212 carries N-linked (GlcNAc...) asparagine glycosylation. Asparagine 244, aspartate 246, proline 248, and glutamate 249 together coordinate Ca(2+). Residue glutamate 249 coordinates Mg(2+). N-linked (GlcNAc...) asparagine glycosylation is present at asparagine 269. Positions 295-314 (LPNDGQCHLKNDVYTMSHYY) are CX3CL1-binding. Alanine 362 contacts Ca(2+). The tract at residues 383–465 (ILENSKLPEG…IILQFICECE (83 aa)) is interaction with TMEM182. N-linked (GlcNAc...) asparagine glycosylation is found at asparagine 406 and asparagine 417. 4 consecutive I-EGF domains span residues 466–501 (CQGE…RHCE), 502–554 (CSTD…KFCE), 555–591 (CDNF…SACD), and 592–631 (CSLD…PTCE). A glycan (N-linked (GlcNAc...) asparagine) is linked at asparagine 481. N-linked (GlcNAc...) asparagine glycosylation is present at asparagine 520. N-linked (GlcNAc...) asparagine glycosylation is present at asparagine 584. Asparagine 669 is a glycosylation site (N-linked (GlcNAc...) asparagine). Residues 729-749 (IIPIVAGVVAGIVLIGLALLL) form a helical membrane-spanning segment. Over 750–798 (IWKLLMIIHDRREFAKFEKERMNAKWDTGENPIYKSAVTTVVNPKYEGK) the chain is Cytoplasmic. Positions 762-767 (EFAKFE) are signal for sorting from recycling endosomes; interaction with ACAP1. A Phosphothreonine modification is found at threonine 777. Tyrosine 783 is modified (phosphotyrosine). Serine 785 is modified (phosphoserine). Positions 785 to 792 (SAVTTVVN) are interaction with ITGB1BP1. Position 789 is a phosphothreonine (threonine 789). Lysine 794 is modified (N6-acetyllysine; alternate). Lysine 794 is covalently cross-linked (Glycyl lysine isopeptide (Lys-Gly) (interchain with G-Cter in SUMO1); alternate).

Belongs to the integrin beta chain family. As to quaternary structure, interacts with seprase FAP (seprase); the interaction occurs at the cell surface of invadopodia membrane in a collagen-dependent manner. Heterodimer of an alpha and a beta subunit. Beta-1 associates with either alpha-1, alpha-2, alpha-3, alpha-4, alpha-5, alpha-6, alpha-7, alpha-8, alpha-9, alpha-10, alpha-11 or alpha-V. ITGA6:ITGB1 is found in a complex with CD9; interaction takes place in oocytes and is involved in sperm-egg fusion. Binds LGALS3BP and NMRK2, when associated with alpha-7, but not with alpha-5. Interacts with FLNA, FLNB, FLNC and RANBP9. Interacts with KRT1 in the presence of RACK1 and SRC. Interacts with JAML; integrin alpha-4/beta-1 may regulate leukocyte to endothelial cells adhesion by controlling JAML homodimerization. Interacts with RAB21. Interacts (via the cytoplasmic region) with RAB25 (via the hypervariable C-terminal region). Interacts with MYO10. Interacts with ITGB1BP1 (via C-terminal region); the interaction is a prerequisite for focal adhesion disassembly. Interacts with TLN1; the interaction is prevented by competitive binding of ITGB1BP1. Interacts with ACAP1; required for ITGB1 recycling. Interacts with ASAP3. Interacts with FERMT2; the interaction is inhibited in presence of ITGB1BP1. Interacts with DAB2. Interacts with FGR and HCK. Interacts with alpha-7A and alpha-7B in adult skeletal muscle. Interacts with alpha-7B in cardiomyocytes of adult heart. Interacts with EMP2; the interaction may be direct or indirect and ITGB1 has a heterodimer form. ITGA5:ITGB1 interacts with CCN3. ITGA4:ITGB1 is found in a ternary complex with CX3CR1 and CX3CL1. ITGA5:ITGB1 interacts with FBN1. ITGA5:ITGB1 acts as a receptor for fibronectin FN1 and mediates R-G-D-dependent cell adhesion to FN1. ITGA5:ITGB1 interacts with IL1B. Interacts with MDK. ITGA4:ITGB1 interacts with MDK; this interaction mediates MDK-induced osteoblast cells migration through PXN phosphorylation. ITGA6:ITGB1 interacts with MDK; this interaction mediates MDK-induced neurite-outgrowth. ITGA5:ITGB1 interacts with ACE2. Interacts with TMEM182 and LAMB1. Interacts with tensin TNS3; TNS3 also interacts with PEAK1, thus acting as an adapter molecule to bridge the association of PEAK1 with ITGB1. Interacts with tensin TNS4; the interaction displaces tensin TNS3 from the ITGB1 cytoplasmic tail and promotes ITGB1 stability. Integrin ITGA9:ITGB1 interacts with SPP1/OPN (via N-terminus). Integrin ITGA9:ITGB1 interacts with TNC/TNFN3 (via the 3rd Fibronectin type-III domain). Integrins ITGA4:ITGB1 and ITGA9:ITGB1 interact with SVEP1 (via Sushi domain 21); thereby inhibit Ca(2+) intracellular signaling and as a result repress vasocontraction. ITGA4:ITGB1 and ITGA5:ITGB1 interacts with SELP. Interacts with CD248. ITGA5:ITGB1 interacts with IGFBP1. ITGA4:ITGB1 interacts with BCAM. Interacts with ADGRG6.

It localises to the cell membrane. The protein resides in the cell projection. It is found in the invadopodium membrane. Its subcellular location is the ruffle membrane. The protein localises to the recycling endosome. It localises to the melanosome. The protein resides in the cell junction. It is found in the focal adhesion. Its subcellular location is the lamellipodium. The protein localises to the ruffle. Integrins alpha-1/beta-1, alpha-2/beta-1, alpha-10/beta-1 and alpha-11/beta-1 are receptors for collagen. Integrins alpha-1/beta-1 and alpha-2/beta-2 recognize the proline-hydroxylated sequence G-F-P-G-E-R in collagen. Integrins alpha-2/beta-1, alpha-3/beta-1, alpha-4/beta-1, alpha-5/beta-1, alpha-8/beta-1, alpha-10/beta-1, alpha-11/beta-1 and alpha-V/beta-1 are receptors for fibronectin. Alpha-4/beta-1 recognizes one or more domains within the alternatively spliced CS-1 and CS-5 regions of fibronectin. Integrin alpha-5/beta-1 is a receptor for fibrinogen. Integrin alpha-1/beta-1, alpha-2/beta-1, alpha-6/beta-1 and alpha-7/beta-1 are receptors for lamimin. Integrin alpha-6/beta-1 (ITGA6:ITGB1) is present in oocytes and is involved in sperm-egg fusion. Integrin alpha-4/beta-1 is a receptor for VCAM1 and recognizes the sequence Q-I-D-S in VCAM1. Integrin alpha-9/beta-1 is a receptor for VCAM1, cytotactin and osteopontin. It recognizes the sequence A-E-I-D-G-I-E-L in cytotactin. Integrin alpha-3/beta-1 is a receptor for epiligrin, thrombospondin and CSPG4. Integrin alpha-3/beta-1 provides a docking site for FAP (seprase) at invadopodia plasma membranes in a collagen-dependent manner and hence may participate in the adhesion, formation of invadopodia and matrix degradation processes, promoting cell invasion. Alpha-3/beta-1 may mediate with LGALS3 the stimulation by CSPG4 of endothelial cells migration. Integrin alpha-V/beta-1 is a receptor for vitronectin. Beta-1 integrins recognize the sequence R-G-D in a wide array of ligands. When associated with alpha-7/beta-1 integrin, regulates cell adhesion and laminin matrix deposition. Involved in promoting endothelial cell motility and angiogenesis. Involved in osteoblast compaction through the fibronectin fibrillogenesis cell-mediated matrix assembly process and the formation of mineralized bone nodules. May be involved in up-regulation of the activity of kinases such as PKC via binding to KRT1. Together with KRT1 and RACK1, serves as a platform for SRC activation or inactivation. Plays a mechanistic adhesive role during telophase, required for the successful completion of cytokinesis. ITGA4:ITGB1 binds to fractalkine (CX3CL1) and may act as its coreceptor in CX3CR1-dependent fractalkine signaling. ITGA4:ITGB1 and ITGA5:ITGB1 bind to PLA2G2A via a site (site 2) which is distinct from the classical ligand-binding site (site 1) and this induces integrin conformational changes and enhanced ligand binding to site 1. ITGA5:ITGB1 acts as a receptor for fibrillin-1 (FBN1) and mediates R-G-D-dependent cell adhesion to FBN1. ITGA5:ITGB1 is a receptor for IL1B and binding is essential for IL1B signaling. ITGA5:ITGB3 is a receptor for soluble CD40LG and is required for CD40/CD40LG signaling. Plays an important role in myoblast differentiation and fusion during skeletal myogenesis. ITGA9:ITGB1 may play a crucial role in SVEP1/polydom-mediated myoblast cell adhesion. Integrins ITGA9:ITGB1 and ITGA4:ITGB1 repress PRKCA-mediated L-type voltage-gated channel Ca(2+) influx and ROCK-mediated calcium sensitivity in vascular smooth muscle cells via their interaction with SVEP1, thereby inhibit vasocontraction. This is Integrin beta-1 from Camelus bactrianus (Bactrian camel).